The sequence spans 177 residues: ADP-ribosylation factor-like protein 3 (177 aa).

Gly-2 carries the N-myristoyl glycine lipid modification. Residues 23–31 (GLDNAGKTT), 125–128 (NKQD), and Ala-159 each bind GTP.

It belongs to the small GTPase superfamily. Arf family.

It localises to the golgi apparatus membrane. The protein localises to the cytoplasm. It is found in the cytoskeleton. Its subcellular location is the spindle. The protein resides in the nucleus. It localises to the microtubule organizing center. Its function is as follows. Small GTP-binding protein which cycles between an inactive GDP-bound and an active GTP-bound form, and the rate of cycling is regulated by guanine nucleotide exchange factors (GEF) and GTPase-activating proteins (GAP). Required for normal cytokinesis and cilia signaling. Required for targeting proteins to the ciliary membrane by releasing myristoylated protein from unc119 cargo adapters into the cilium. In Chlamydomonas reinhardtii (Chlamydomonas smithii), this protein is ADP-ribosylation factor-like protein 3.